A 548-amino-acid polypeptide reads, in one-letter code: Formyltransferase/hydrolase complex Fhc subunit A (548 aa).

3 residues coordinate Zn(2+): His-57, His-59, and His-227.

This sequence belongs to the metallo-dependent hydrolases superfamily. FwdA/FmdA family. In terms of assembly, octaheteromer. Part of the formyltransferase/hydrolase complex fhc; composed of FhcA, FhcB, FhcC and FhcD. Requires Zn(2+) as cofactor.

The protein resides in the cytoplasm. It carries out the reaction N-formylmethanofuran + H2O = methanofuran + formate. It functions in the pathway one-carbon metabolism; formaldehyde degradation; formate from formaldehyde (H(4)MPT route): step 4/5. In terms of biological role, involved in the transformation of 5-formyl tetrahydromethanopterin (5-formyl-H(4)MPT) to methanofuran (MFR) and formate via the formylmethanofuran (formyl-MFR). May be catalyze the hydrolysis of formylmethanofuran (formyl-MFR) to yield formate and MFR. This Methylorubrum extorquens (strain ATCC 14718 / DSM 1338 / JCM 2805 / NCIMB 9133 / AM1) (Methylobacterium extorquens) protein is Formyltransferase/hydrolase complex Fhc subunit A (fhcA).